A 272-amino-acid polypeptide reads, in one-letter code: 3-methyl-2-oxobutanoate hydroxymethyltransferase (272 aa).

Residues Asp42 and Asp86 each coordinate Mg(2+). Residues 42 to 43 (DS), Asp86, and Lys116 contribute to the 3-methyl-2-oxobutanoate site. Residue Glu118 coordinates Mg(2+). The Proton acceptor role is filled by Glu185.

Belongs to the PanB family. Homodecamer; pentamer of dimers. Mg(2+) serves as cofactor.

The protein localises to the cytoplasm. It carries out the reaction 3-methyl-2-oxobutanoate + (6R)-5,10-methylene-5,6,7,8-tetrahydrofolate + H2O = 2-dehydropantoate + (6S)-5,6,7,8-tetrahydrofolate. The protein operates within cofactor biosynthesis; (R)-pantothenate biosynthesis; (R)-pantoate from 3-methyl-2-oxobutanoate: step 1/2. Catalyzes the reversible reaction in which hydroxymethyl group from 5,10-methylenetetrahydrofolate is transferred onto alpha-ketoisovalerate to form ketopantoate. The protein is 3-methyl-2-oxobutanoate hydroxymethyltransferase of Prochlorococcus marinus (strain NATL1A).